Consider the following 82-residue polypeptide: ATP synthase subunit c (82 aa).

The next 2 membrane-spanning stretches (helical) occupy residues 7-27 (AASV…PGIG) and 57-77 (LAFM…LLFA).

Belongs to the ATPase C chain family. F-type ATPases have 2 components, F(1) - the catalytic core - and F(0) - the membrane proton channel. F(1) has five subunits: alpha(3), beta(3), gamma(1), delta(1), epsilon(1). F(0) has four main subunits: a(1), b(1), b'(1) and c(10-14). The alpha and beta chains form an alternating ring which encloses part of the gamma chain. F(1) is attached to F(0) by a central stalk formed by the gamma and epsilon chains, while a peripheral stalk is formed by the delta, b and b' chains.

The protein resides in the cellular thylakoid membrane. In terms of biological role, f(1)F(0) ATP synthase produces ATP from ADP in the presence of a proton or sodium gradient. F-type ATPases consist of two structural domains, F(1) containing the extramembraneous catalytic core and F(0) containing the membrane proton channel, linked together by a central stalk and a peripheral stalk. During catalysis, ATP synthesis in the catalytic domain of F(1) is coupled via a rotary mechanism of the central stalk subunits to proton translocation. Its function is as follows. Key component of the F(0) channel; it plays a direct role in translocation across the membrane. A homomeric c-ring of between 10-14 subunits forms the central stalk rotor element with the F(1) delta and epsilon subunits. The sequence is that of ATP synthase subunit c from Synechococcus sp. (strain RCC307).